We begin with the raw amino-acid sequence, 129 residues long: DNA-directed RNA polymerase subunit omega (129 aa).

A disordered region spans residues 76–100 (EVDEPEPEAVPMIASGDSSGGEDSD).

It belongs to the RNA polymerase subunit omega family. The RNAP catalytic core consists of 2 alpha, 1 beta, 1 beta' and 1 omega subunit. When a sigma factor is associated with the core the holoenzyme is formed, which can initiate transcription.

It carries out the reaction RNA(n) + a ribonucleoside 5'-triphosphate = RNA(n+1) + diphosphate. Its function is as follows. Promotes RNA polymerase assembly. Latches the N- and C-terminal regions of the beta' subunit thereby facilitating its interaction with the beta and alpha subunits. The chain is DNA-directed RNA polymerase subunit omega from Xanthobacter autotrophicus (strain ATCC BAA-1158 / Py2).